The primary structure comprises 87 residues: Cell division protein FtsL (87 aa).

The Cytoplasmic portion of the chain corresponds to 1 to 3; the sequence is MSR. Residues 4–23 form a helical membrane-spanning segment; the sequence is LLLIVLLACSIASAIGVVYM. Topologically, residues 24–87 are periplasmic; sequence RHMHRKLFVQ…ETSDIVVIRP (64 aa).

It belongs to the FtsL family. In terms of assembly, part of a complex composed of FtsB, FtsL and FtsQ.

The protein resides in the cell inner membrane. In terms of biological role, essential cell division protein. May link together the upstream cell division proteins, which are predominantly cytoplasmic, with the downstream cell division proteins, which are predominantly periplasmic. The protein is Cell division protein FtsL of Xanthomonas campestris pv. campestris (strain ATCC 33913 / DSM 3586 / NCPPB 528 / LMG 568 / P 25).